The chain runs to 440 residues: Serine hydroxymethyltransferase (440 aa).

Residues Leu119 and 123–125 contribute to the (6S)-5,6,7,8-tetrahydrofolate site; that span reads GHL. At Lys228 the chain carries N6-(pyridoxal phosphate)lysine. 370 to 372 is a binding site for (6S)-5,6,7,8-tetrahydrofolate; sequence SPF.

It belongs to the SHMT family. In terms of assembly, homodimer. Requires pyridoxal 5'-phosphate as cofactor.

It is found in the cytoplasm. The catalysed reaction is (6R)-5,10-methylene-5,6,7,8-tetrahydrofolate + glycine + H2O = (6S)-5,6,7,8-tetrahydrofolate + L-serine. It participates in one-carbon metabolism; tetrahydrofolate interconversion. Its pathway is amino-acid biosynthesis; glycine biosynthesis; glycine from L-serine: step 1/1. Functionally, catalyzes the reversible interconversion of serine and glycine with tetrahydrofolate (THF) serving as the one-carbon carrier. This reaction serves as the major source of one-carbon groups required for the biosynthesis of purines, thymidylate, methionine, and other important biomolecules. Also exhibits THF-independent aldolase activity toward beta-hydroxyamino acids, producing glycine and aldehydes, via a retro-aldol mechanism. This is Serine hydroxymethyltransferase from Chlorobaculum tepidum (strain ATCC 49652 / DSM 12025 / NBRC 103806 / TLS) (Chlorobium tepidum).